Here is a 180-residue protein sequence, read N- to C-terminus: Photosystem II extrinsic protein V (180 aa).

Residues Met-1–Ala-40 form the signal peptide. The heme c site is built by Cys-73, Cys-76, His-77, and His-128.

Belongs to the cytochrome c family. PsbV subfamily. In terms of assembly, PSII is composed of 1 copy each of membrane proteins PsbA, PsbB, PsbC, PsbD, PsbE, PsbF, PsbH, PsbI, PsbJ, PsbK, PsbL, PsbM, PsbT, PsbX, PsbY, PsbZ, Psb30/Ycf12, peripheral proteins PsbO, CyanoQ (PsbQ), PsbU, PsbV and a large number of cofactors. It forms dimeric complexes. Requires heme c as cofactor.

The protein localises to the cellular thylakoid membrane. In terms of biological role, one of the extrinsic, lumenal subunits of photosystem II (PSII). PSII is a light-driven water plastoquinone oxidoreductase, using light energy to abstract electrons from H(2)O, generating a proton gradient subsequently used for ATP formation. The extrinsic proteins stabilize the structure of photosystem II oxygen-evolving complex (OEC), the ion environment of oxygen evolution and protect the OEC against heat-induced inactivation. Low-potential cytochrome c that plays a role in the OEC of PSII. The sequence is that of Photosystem II extrinsic protein V from Synechococcus sp. (strain JA-2-3B'a(2-13)) (Cyanobacteria bacterium Yellowstone B-Prime).